A 190-amino-acid polypeptide reads, in one-letter code: Succinate dehydrogenase assembly factor 2, mitochondrial (190 aa).

Belongs to the SDHAF2 family. In terms of assembly, interacts with the flavoprotein subunit within the SDH catalytic dimer.

Its subcellular location is the mitochondrion matrix. In terms of biological role, plays an essential role in the assembly of succinate dehydrogenase (SDH), an enzyme complex (also referred to as respiratory complex II) that is a component of both the tricarboxylic acid (TCA) cycle and the mitochondrial electron transport chain, and which couples the oxidation of succinate to fumarate with the reduction of ubiquinone (coenzyme Q) to ubiquinol. Required for flavinylation (covalent attachment of FAD) of the flavoprotein subunit of the SDH catalytic dimer. This chain is Succinate dehydrogenase assembly factor 2, mitochondrial, found in Komagataella phaffii (strain GS115 / ATCC 20864) (Yeast).